A 115-amino-acid chain; its full sequence is Promotilin (115 aa).

The first 25 residues, 1-25 (MVSRKAVAALLVVHVAAMLASQTEA), serve as a signal peptide directing secretion. Residues 39–72 (QEKERNKGQKKSLSVWQRSGEEGPVDPAEPIREE) form a disordered region.

It belongs to the motilin family.

The protein resides in the secreted. Plays an important role in the regulation of interdigestive gastrointestinal motility and indirectly causes rhythmic contraction of duodenal and colonic smooth muscle. The chain is Promotilin (MLN) from Homo sapiens (Human).